Consider the following 384-residue polypeptide: Carbamoyl phosphate synthase small chain (384 aa).

Positions 1 to 195 (MLPVLPPALL…LGRGHGTLAD (195 aa)) are CPSase. Residues Ser-50, Gly-247, and Gly-249 each contribute to the L-glutamine site. Positions 199 to 384 (HVVAYDFGVK…RFVALMQERA (186 aa)) constitute a Glutamine amidotransferase type-1 domain. The active-site Nucleophile is Cys-275. Residues Leu-276, Gln-279, Asn-317, Gly-319, and Phe-320 each contribute to the L-glutamine site. Active-site residues include His-359 and Glu-361.

The protein belongs to the CarA family. As to quaternary structure, composed of two chains; the small (or glutamine) chain promotes the hydrolysis of glutamine to ammonia, which is used by the large (or ammonia) chain to synthesize carbamoyl phosphate. Tetramer of heterodimers (alpha,beta)4.

It catalyses the reaction hydrogencarbonate + L-glutamine + 2 ATP + H2O = carbamoyl phosphate + L-glutamate + 2 ADP + phosphate + 2 H(+). It carries out the reaction L-glutamine + H2O = L-glutamate + NH4(+). It functions in the pathway amino-acid biosynthesis; L-arginine biosynthesis; carbamoyl phosphate from bicarbonate: step 1/1. The protein operates within pyrimidine metabolism; UMP biosynthesis via de novo pathway; (S)-dihydroorotate from bicarbonate: step 1/3. Small subunit of the glutamine-dependent carbamoyl phosphate synthetase (CPSase). CPSase catalyzes the formation of carbamoyl phosphate from the ammonia moiety of glutamine, carbonate, and phosphate donated by ATP, constituting the first step of 2 biosynthetic pathways, one leading to arginine and/or urea and the other to pyrimidine nucleotides. The small subunit (glutamine amidotransferase) binds and cleaves glutamine to supply the large subunit with the substrate ammonia. The polypeptide is Carbamoyl phosphate synthase small chain (Rubrivivax gelatinosus (strain NBRC 100245 / IL144)).